The chain runs to 292 residues: 4-hydroxy-tetrahydrodipicolinate synthase (292 aa).

Position 45 (Thr45) interacts with pyruvate. Catalysis depends on Tyr133, which acts as the Proton donor/acceptor. Lys161 acts as the Schiff-base intermediate with substrate in catalysis. Position 203 (Ile203) interacts with pyruvate.

This sequence belongs to the DapA family. Homotetramer; dimer of dimers.

It is found in the cytoplasm. The enzyme catalyses L-aspartate 4-semialdehyde + pyruvate = (2S,4S)-4-hydroxy-2,3,4,5-tetrahydrodipicolinate + H2O + H(+). It functions in the pathway amino-acid biosynthesis; L-lysine biosynthesis via DAP pathway; (S)-tetrahydrodipicolinate from L-aspartate: step 3/4. In terms of biological role, catalyzes the condensation of (S)-aspartate-beta-semialdehyde [(S)-ASA] and pyruvate to 4-hydroxy-tetrahydrodipicolinate (HTPA). The protein is 4-hydroxy-tetrahydrodipicolinate synthase of Dechloromonas aromatica (strain RCB).